The primary structure comprises 89 residues: Small ribosomal subunit protein uS17 (89 aa).

This sequence belongs to the universal ribosomal protein uS17 family. As to quaternary structure, part of the 30S ribosomal subunit.

Functionally, one of the primary rRNA binding proteins, it binds specifically to the 5'-end of 16S ribosomal RNA. In Leptospira borgpetersenii serovar Hardjo-bovis (strain JB197), this protein is Small ribosomal subunit protein uS17.